A 910-amino-acid polypeptide reads, in one-letter code: Dynein axonemal assembly factor 1 homolog (910 aa).

5 LRR repeats span residues 43–64 (GLKCLWLECNAISNISGLDHQS), 65–86 (QLRCLYLHNNLIKKIENLQHCK), 87–108 (QLDTLNLSHNHIAKIENCGSDI), 111–132 (VLNTLNISHNYLKSIESLAELR), and 136–157 (FVSVLDISHNRIEDIAIVKVLA). One can recognise an LRRCT domain in the interval 171-209 (PVVNDIPSYRKTLILECKSLTYLDSRPVFDKDRACAEAW). Residues 217–230 (ERKEHQRWKKEEQR) show a composition bias toward basic and acidic residues. 6 disordered regions span residues 217 to 275 (ERKE…GDFE), 297 to 332 (TKGDTQQAQKLAEERKASTNSVDYITGSDSNSDPTL), 344 to 399 (SRAC…GSIL), 620 to 642 (EQVPDEVEANDKASDATIDPVDQ), 662 to 682 (QVEVGPSDPKDATTSKPIPEE), and 855 to 910 (EELE…QGDH). Residues 314–331 (STNSVDYITGSDSNSDPT) show a composition bias toward polar residues. Positions 380–389 (SLSDSSSSSS) are enriched in low complexity. Residues 620–633 (EQVPDEVEANDKAS) show a composition bias toward basic and acidic residues. Positions 855–865 (EELEELNEEED) are enriched in acidic residues. The span at 866–878 (PALKEAGDFKHDE) shows a compositional bias: basic and acidic residues.

It belongs to the DNAAF1 family.

The protein localises to the cell projection. The protein resides in the cilium. Functionally, cilium-specific protein required for cilia structures. The chain is Dynein axonemal assembly factor 1 homolog from Anopheles gambiae (African malaria mosquito).